The sequence spans 317 residues: Regulator of microtubule dynamics protein 1 (317 aa).

Lysine 168 bears the N6-succinyllysine mark. TPR repeat units follow at residues 171–207 (AICI…NPKD) and 225–261 (PWYQ…DPNF).

This sequence belongs to the RMDN family. As to quaternary structure, interacts with microtubules.

It is found in the cytoplasm. Its subcellular location is the cytoskeleton. It localises to the spindle. The protein localises to the spindle pole. This chain is Regulator of microtubule dynamics protein 1 (RMDN1), found in Bos taurus (Bovine).